Here is a 627-residue protein sequence, read N- to C-terminus: 1-deoxy-D-xylulose-5-phosphate synthase (627 aa).

Residues H87 and 128 to 130 (GHS) each bind thiamine diphosphate. D159 contributes to the Mg(2+) binding site. Thiamine diphosphate is bound by residues 160-161 (GA), N188, F295, and E375. Residue N188 coordinates Mg(2+).

Belongs to the transketolase family. DXPS subfamily. As to quaternary structure, homodimer. Requires Mg(2+) as cofactor. It depends on thiamine diphosphate as a cofactor.

It carries out the reaction D-glyceraldehyde 3-phosphate + pyruvate + H(+) = 1-deoxy-D-xylulose 5-phosphate + CO2. It functions in the pathway metabolic intermediate biosynthesis; 1-deoxy-D-xylulose 5-phosphate biosynthesis; 1-deoxy-D-xylulose 5-phosphate from D-glyceraldehyde 3-phosphate and pyruvate: step 1/1. Catalyzes the acyloin condensation reaction between C atoms 2 and 3 of pyruvate and glyceraldehyde 3-phosphate to yield 1-deoxy-D-xylulose-5-phosphate (DXP). This Pseudomonas paraeruginosa (strain DSM 24068 / PA7) (Pseudomonas aeruginosa (strain PA7)) protein is 1-deoxy-D-xylulose-5-phosphate synthase.